Here is a 228-residue protein sequence, read N- to C-terminus: UPF0758 protein MW1604 (228 aa).

The region spanning 102-224 (KITQPSDVAD…FTSLVEAGYF (123 aa)) is the MPN domain. Zn(2+)-binding residues include histidine 173, histidine 175, and aspartate 186. The short motif at 173-186 (HNHPSGDVTPSQED) is the JAMM motif element.

It belongs to the UPF0758 family.

This Staphylococcus aureus (strain MW2) protein is UPF0758 protein MW1604.